The chain runs to 179 residues: uncharacterized protein (179 aa).

A Rhodanese domain is found at 21-109 (QQDAVILVDV…WKQAGLPTVK (89 aa)). A run of 2 helical transmembrane segments spans residues 115-135 (ISIM…GVLL) and 138-158 (FVAP…LFAG).

The protein resides in the cell membrane. This is an uncharacterized protein from Synechocystis sp. (strain ATCC 27184 / PCC 6803 / Kazusa).